Consider the following 232-residue polypeptide: MKFQARVLTLYPEMFPGFLGYSLAGQALERGIWSLETVQIRDFALDKHHSVDDTPAGGGAGMVMRADVLAAALDSCPHDSTRLLMSPRGRPFNQAYARFLACESGVTLVCGRFEGVDERIIEARKLEEVSIGDYILSGGETAALVLLDAIVRLLPGVMGNEASGKCESFENGLLEHPQYTRPSIFEGRCIPPVLTSGHHKAIADWRQQQAELLTRQRRPELYALYDKNRQKT.

Residues glycine 111 and 131 to 136 (IGDYIL) each bind S-adenosyl-L-methionine.

The protein belongs to the RNA methyltransferase TrmD family. In terms of assembly, homodimer.

The protein localises to the cytoplasm. It carries out the reaction guanosine(37) in tRNA + S-adenosyl-L-methionine = N(1)-methylguanosine(37) in tRNA + S-adenosyl-L-homocysteine + H(+). Its function is as follows. Specifically methylates guanosine-37 in various tRNAs. In Bartonella quintana (strain Toulouse) (Rochalimaea quintana), this protein is tRNA (guanine-N(1)-)-methyltransferase.